The primary structure comprises 128 residues: Probable cystatin-15 (128 aa).

The signal sequence occupies residues 1–20; it reads MFWKLPLLLGLLALGPHVCS. Cysteine 82 and cysteine 92 are joined by a disulfide. Asparagine 104 carries N-linked (GlcNAc...) asparagine glycosylation. Cysteine 105 and cysteine 125 are disulfide-bonded.

Belongs to the cystatin family.

It is found in the secreted. The sequence is that of Probable cystatin-15 from Bos taurus (Bovine).